A 170-amino-acid chain; its full sequence is Bifunctional protein PyrR (170 aa).

The PRPP-binding signature appears at Leu90–Thr102.

It belongs to the purine/pyrimidine phosphoribosyltransferase family. PyrR subfamily.

The catalysed reaction is UMP + diphosphate = 5-phospho-alpha-D-ribose 1-diphosphate + uracil. In terms of biological role, regulates the transcription of the pyrimidine nucleotide (pyr) operon in response to exogenous pyrimidines. Functionally, also displays a weak uracil phosphoribosyltransferase activity which is not physiologically significant. This chain is Bifunctional protein PyrR, found in Pseudomonas savastanoi pv. phaseolicola (strain 1448A / Race 6) (Pseudomonas syringae pv. phaseolicola (strain 1448A / Race 6)).